We begin with the raw amino-acid sequence, 215 residues long: Large ribosomal subunit protein uL4 (215 aa).

Residues 46 to 72 (TAKSKNRAEVSGGGRKPWAQKGGGRAR) are disordered. Positions 56–71 (SGGGRKPWAQKGGGRA) are enriched in gly residues.

The protein belongs to the universal ribosomal protein uL4 family. In terms of assembly, part of the 50S ribosomal subunit.

Its function is as follows. One of the primary rRNA binding proteins, this protein initially binds near the 5'-end of the 23S rRNA. It is important during the early stages of 50S assembly. It makes multiple contacts with different domains of the 23S rRNA in the assembled 50S subunit and ribosome. Forms part of the polypeptide exit tunnel. The polypeptide is Large ribosomal subunit protein uL4 (Helicobacter pylori (strain G27)).